We begin with the raw amino-acid sequence, 96 residues long: Large ribosomal subunit protein eL14 (96 aa).

This sequence belongs to the eukaryotic ribosomal protein eL14 family.

This Saccharolobus islandicus (strain M.14.25 / Kamchatka #1) (Sulfolobus islandicus) protein is Large ribosomal subunit protein eL14.